The following is a 217-amino-acid chain: Thymidylate kinase (217 aa).

7–14 serves as a coordination point for ATP; the sequence is GIEGTGKT.

The protein belongs to the thymidylate kinase family.

The catalysed reaction is dTMP + ATP = dTDP + ADP. Phosphorylation of dTMP to form dTDP in both de novo and salvage pathways of dTTP synthesis. The polypeptide is Thymidylate kinase (Maridesulfovibrio salexigens (strain ATCC 14822 / DSM 2638 / NCIMB 8403 / VKM B-1763) (Desulfovibrio salexigens)).